The following is a 509-amino-acid chain: ATP synthase subunit alpha (509 aa).

169-176 is an ATP binding site; it reads GDRQTGKT.

Belongs to the ATPase alpha/beta chains family. F-type ATPases have 2 components, CF(1) - the catalytic core - and CF(0) - the membrane proton channel. CF(1) has five subunits: alpha(3), beta(3), gamma(1), delta(1), epsilon(1). CF(0) has three main subunits: a(1), b(2) and c(9-12). The alpha and beta chains form an alternating ring which encloses part of the gamma chain. CF(1) is attached to CF(0) by a central stalk formed by the gamma and epsilon chains, while a peripheral stalk is formed by the delta and b chains.

Its subcellular location is the cell inner membrane. The enzyme catalyses ATP + H2O + 4 H(+)(in) = ADP + phosphate + 5 H(+)(out). Produces ATP from ADP in the presence of a proton gradient across the membrane. The alpha chain is a regulatory subunit. The polypeptide is ATP synthase subunit alpha (Methylocella silvestris (strain DSM 15510 / CIP 108128 / LMG 27833 / NCIMB 13906 / BL2)).